A 526-amino-acid polypeptide reads, in one-letter code: Peptide chain release factor 3 (526 aa).

Residues 11-277 (SKRRTFAIIS…SLIKWAPSPL (267 aa)) enclose the tr-type G domain. Residues 20–27 (SHPDAGKT), 88–92 (DTPGH), and 142–145 (NKLD) contribute to the GTP site.

This sequence belongs to the TRAFAC class translation factor GTPase superfamily. Classic translation factor GTPase family. PrfC subfamily.

The protein resides in the cytoplasm. Its function is as follows. Increases the formation of ribosomal termination complexes and stimulates activities of RF-1 and RF-2. It binds guanine nucleotides and has strong preference for UGA stop codons. It may interact directly with the ribosome. The stimulation of RF-1 and RF-2 is significantly reduced by GTP and GDP, but not by GMP. The sequence is that of Peptide chain release factor 3 from Buchnera aphidicola subsp. Acyrthosiphon pisum (strain Tuc7).